Consider the following 459-residue polypeptide: UNC93-like protein 1 (459 aa).

Residues 1–26 form a disordered region; it reads MNVRDEGKTTAEKHGGGEENKSPENK. 11 helical membrane passes run 38-58, 73-93, 96-116, 122-142, 159-179, 195-215, 251-271, 287-307, 314-334, 355-375, and 425-445; these read LMGF…GMGG, AVYT…NVLG, LTLA…LYYN, AFAI…WAGE, IALF…IPFI, YIAF…ILPA, LLIV…FNNV, FYWG…DFSF, GFTG…GGLA, GIEF…DAMY, and LIVN…LVYF.

It belongs to the unc-93 family.

The protein localises to the membrane. This chain is UNC93-like protein 1, found in Arabidopsis thaliana (Mouse-ear cress).